The chain runs to 412 residues: Imidazolonepropionase (412 aa).

Residues H76 and H78 each contribute to the Fe(3+) site. Zn(2+) contacts are provided by H76 and H78. 4-imidazolone-5-propanoate contacts are provided by R85, Y148, and H181. N-formimidoyl-L-glutamate is bound at residue Y148. H242 provides a ligand contact to Fe(3+). H242 contacts Zn(2+). Residue E245 coordinates 4-imidazolone-5-propanoate. D317 provides a ligand contact to Fe(3+). D317 serves as a coordination point for Zn(2+). N-formimidoyl-L-glutamate contacts are provided by N319 and G321. Residue S322 participates in 4-imidazolone-5-propanoate binding.

This sequence belongs to the metallo-dependent hydrolases superfamily. HutI family. Requires Zn(2+) as cofactor. Fe(3+) serves as cofactor.

The protein localises to the cytoplasm. The catalysed reaction is 4-imidazolone-5-propanoate + H2O = N-formimidoyl-L-glutamate. It functions in the pathway amino-acid degradation; L-histidine degradation into L-glutamate; N-formimidoyl-L-glutamate from L-histidine: step 3/3. Catalyzes the hydrolytic cleavage of the carbon-nitrogen bond in imidazolone-5-propanoate to yield N-formimidoyl-L-glutamate. It is the third step in the universal histidine degradation pathway. The sequence is that of Imidazolonepropionase from Staphylococcus saprophyticus subsp. saprophyticus (strain ATCC 15305 / DSM 20229 / NCIMB 8711 / NCTC 7292 / S-41).